The sequence spans 489 residues: Protein TOS4 (489 aa).

2 stretches are compositionally biased toward polar residues: residues 1–10 (MSSQFPSSPY) and 20–32 (NYKQ…SSNY). Positions 1–101 (MSSQFPSSPY…FSSKLSSPSR (101 aa)) are disordered. Ser40 carries the post-translational modification Phosphoserine. The span at 56–68 (PSSSIGRVSSPVR) shows a compositional bias: polar residues. Residues 89–100 (SPKFSSKLSSPS) are compositionally biased toward low complexity. A Phosphoserine modification is found at Ser100. Residues 118 to 170 (ITVGRNSSQCDVALCKNKFISRVHASITYLPQTNEVKIHCFSMNGLIVTYRKQ) enclose the FHA domain. The disordered stretch occupies residues 316-366 (SSPLSSVSSVDHEEQTLRQDSLSSDKNPMTMKKPKLNKRVLPSKPKKSVKE). The segment covering 333–342 (RQDSLSSDKN) has biased composition (polar residues).

Belongs to the PLM2/TOS4 family. In terms of processing, phosphorylated by CDC28.

Its subcellular location is the nucleus. In terms of biological role, binds to the promoters of genes with functions important for the G1/S (start) transition; primarily genes involved in pheromone response, polarized growth and transcription. This Saccharomyces cerevisiae (strain ATCC 204508 / S288c) (Baker's yeast) protein is Protein TOS4 (TOS4).